A 130-amino-acid polypeptide reads, in one-letter code: Large ribosomal subunit protein bL12 (130 aa).

This sequence belongs to the bacterial ribosomal protein bL12 family. As to quaternary structure, homodimer. Part of the ribosomal stalk of the 50S ribosomal subunit. Forms a multimeric L10(L12)X complex, where L10 forms an elongated spine to which 2 to 4 L12 dimers bind in a sequential fashion. Binds GTP-bound translation factors.

In terms of biological role, forms part of the ribosomal stalk which helps the ribosome interact with GTP-bound translation factors. Is thus essential for accurate translation. The sequence is that of Large ribosomal subunit protein bL12 from Yersinia pestis bv. Antiqua (strain Angola).